The following is a 341-amino-acid chain: tRNA N6-adenosine threonylcarbamoyltransferase (341 aa).

Residues His115 and His119 each contribute to the Fe cation site. Residues Val138–Gly142, Asp171, Gly184, Asp188, and Asn279 each bind substrate. Asp307 lines the Fe cation pocket.

This sequence belongs to the KAE1 / TsaD family. The cofactor is Fe(2+).

Its subcellular location is the cytoplasm. The catalysed reaction is L-threonylcarbamoyladenylate + adenosine(37) in tRNA = N(6)-L-threonylcarbamoyladenosine(37) in tRNA + AMP + H(+). Required for the formation of a threonylcarbamoyl group on adenosine at position 37 (t(6)A37) in tRNAs that read codons beginning with adenine. Is involved in the transfer of the threonylcarbamoyl moiety of threonylcarbamoyl-AMP (TC-AMP) to the N6 group of A37, together with TsaE and TsaB. TsaD likely plays a direct catalytic role in this reaction. The sequence is that of tRNA N6-adenosine threonylcarbamoyltransferase from Clostridium novyi (strain NT).